A 338-amino-acid polypeptide reads, in one-letter code: Glycerol-3-phosphate dehydrogenase [NAD(P)+] (338 aa).

NADPH is bound by residues Ser13, Trp14, and Lys108. Residues Lys108, Gly139, and Ser141 each contribute to the sn-glycerol 3-phosphate site. Residue Ala143 coordinates NADPH. The sn-glycerol 3-phosphate site is built by Lys194, Asp247, Ser257, Arg258, and Asn259. Residue Lys194 is the Proton acceptor of the active site. Arg258 lines the NADPH pocket. NADPH is bound by residues Val282 and Glu284.

It belongs to the NAD-dependent glycerol-3-phosphate dehydrogenase family.

Its subcellular location is the cytoplasm. The catalysed reaction is sn-glycerol 3-phosphate + NAD(+) = dihydroxyacetone phosphate + NADH + H(+). It catalyses the reaction sn-glycerol 3-phosphate + NADP(+) = dihydroxyacetone phosphate + NADPH + H(+). It participates in membrane lipid metabolism; glycerophospholipid metabolism. In terms of biological role, catalyzes the reduction of the glycolytic intermediate dihydroxyacetone phosphate (DHAP) to sn-glycerol 3-phosphate (G3P), the key precursor for phospholipid synthesis. This is Glycerol-3-phosphate dehydrogenase [NAD(P)+] from Streptococcus pyogenes serotype M2 (strain MGAS10270).